Reading from the N-terminus, the 73-residue chain is Large ribosomal subunit protein bL31 (73 aa).

4 residues coordinate Zn(2+): Cys16, Cys18, Cys38, and Cys41.

Belongs to the bacterial ribosomal protein bL31 family. Type A subfamily. In terms of assembly, part of the 50S ribosomal subunit. It depends on Zn(2+) as a cofactor.

In terms of biological role, binds the 23S rRNA. This Vibrio vulnificus (strain CMCP6) protein is Large ribosomal subunit protein bL31.